The chain runs to 147 residues: Small ribosomal subunit protein uS12 (147 aa).

This sequence belongs to the universal ribosomal protein uS12 family. As to quaternary structure, part of the 30S ribosomal subunit.

With S4 and S5 plays an important role in translational accuracy. Located at the interface of the 30S and 50S subunits. This chain is Small ribosomal subunit protein uS12, found in Methanococcus maripaludis (strain C7 / ATCC BAA-1331).